The following is a 338-amino-acid chain: Anthranilate phosphoribosyltransferase (338 aa).

Residues glycine 81, 84-85 (GD), threonine 89, 91-94 (NIST), 109-117 (KHGNRAQSS), and threonine 121 contribute to the 5-phospho-alpha-D-ribose 1-diphosphate site. Glycine 81 serves as a coordination point for anthranilate. Serine 93 serves as a coordination point for Mg(2+). Asparagine 112 contributes to the anthranilate binding site. Anthranilate is bound at residue arginine 167. Mg(2+) contacts are provided by aspartate 225 and glutamate 226.

The protein belongs to the anthranilate phosphoribosyltransferase family. As to quaternary structure, homodimer. The cofactor is Mg(2+).

The catalysed reaction is N-(5-phospho-beta-D-ribosyl)anthranilate + diphosphate = 5-phospho-alpha-D-ribose 1-diphosphate + anthranilate. The protein operates within amino-acid biosynthesis; L-tryptophan biosynthesis; L-tryptophan from chorismate: step 2/5. Catalyzes the transfer of the phosphoribosyl group of 5-phosphorylribose-1-pyrophosphate (PRPP) to anthranilate to yield N-(5'-phosphoribosyl)-anthranilate (PRA). This chain is Anthranilate phosphoribosyltransferase, found in Rhizobium rhizogenes (strain K84 / ATCC BAA-868) (Agrobacterium radiobacter).